A 414-amino-acid chain; its full sequence is Glucose-1-phosphate adenylyltransferase (414 aa).

Alpha-D-glucose 1-phosphate is bound by residues Gly-164, 181-182 (EK), and Ser-199.

The protein belongs to the bacterial/plant glucose-1-phosphate adenylyltransferase family. In terms of assembly, homotetramer.

The catalysed reaction is alpha-D-glucose 1-phosphate + ATP + H(+) = ADP-alpha-D-glucose + diphosphate. It participates in glycan biosynthesis; glycogen biosynthesis. In terms of biological role, involved in the biosynthesis of ADP-glucose, a building block required for the elongation reactions to produce glycogen. Catalyzes the reaction between ATP and alpha-D-glucose 1-phosphate (G1P) to produce pyrophosphate and ADP-Glc. The sequence is that of Glucose-1-phosphate adenylyltransferase from Leifsonia xyli subsp. xyli (strain CTCB07).